A 180-amino-acid polypeptide reads, in one-letter code: MKNLEQTWRSILDEFHQQANLREGHIVVIGCSTSEVAGRRIGTSGSEQIAEAVYKGLEELRDRTGIALAFQCCEHLNRALVVEEETAKAYRLPVVFAIPVPKAGGSMASYAYKHMKAPVLVEQIEADAGIDIGDTFIGMHLKPVAVPVRVSQKQLGEAHVTLARTRPKLIGGVRAVYEAE.

The protein belongs to the UPF0340 family.

In Bacillus licheniformis (strain ATCC 14580 / DSM 13 / JCM 2505 / CCUG 7422 / NBRC 12200 / NCIMB 9375 / NCTC 10341 / NRRL NRS-1264 / Gibson 46), this protein is UPF0340 protein BLi03936/BL03990.